Here is a 278-residue protein sequence, read N- to C-terminus: MRTIALLLAYDGTDFAGSQWQTDIRTVQGALESAWEALTQERRRIVLAGRTDAGVHATGQVAHVQTTTRHNLQTIWRGLNAHLPVDLAIQNVGEAVPDFHARFSAIQREYRYLIDCAAAPLPQLRHQVLHYAGTLDVAAMTAALKLLEGTHDFAAFTTATPAQRSTVRTMYWTRVGDYEWFERRLLAIEVAANAFLQHMVRMIVGTLLLVGRGRMTVDQFGEVLASRDRRLAGPTAPAHGLTLTAVRYPPGLIRWVEPSKRQNGTTKVEQPSSYVHEE.

Catalysis depends on aspartate 52, which acts as the Nucleophile. Residue tyrosine 110 coordinates substrate. Residues 259-278 (SKRQNGTTKVEQPSSYVHEE) form a disordered region. Polar residues predominate over residues 261–278 (RQNGTTKVEQPSSYVHEE).

It belongs to the tRNA pseudouridine synthase TruA family. As to quaternary structure, homodimer.

The enzyme catalyses uridine(38/39/40) in tRNA = pseudouridine(38/39/40) in tRNA. Formation of pseudouridine at positions 38, 39 and 40 in the anticodon stem and loop of transfer RNAs. The protein is tRNA pseudouridine synthase A of Chloroflexus aurantiacus (strain ATCC 29366 / DSM 635 / J-10-fl).